Reading from the N-terminus, the 115-residue chain is T cell receptor beta variable 7-8 (115 aa).

The N-terminal stretch at 1–21 is a signal peptide; the sequence is MGTRLLCWVVLGFLGTDHTGA. The Ig-like domain occupies 22–115; that stretch reads GVSQSPRYKV…SAVYLCASSL (94 aa). A disulfide bridge connects residues Cys-42 and Cys-111.

Alpha-beta TR is a heterodimer composed of an alpha and beta chain; disulfide-linked. The alpha-beta TR is associated with the transmembrane signaling CD3 coreceptor proteins to form the TR-CD3 (TcR or TCR). The assembly of alpha-beta TR heterodimers with CD3 occurs in the endoplasmic reticulum where a single alpha-beta TR heterodimer associates with one CD3D-CD3E heterodimer, one CD3G-CD3E heterodimer and one CD247 homodimer forming a stable octameric structure. CD3D-CD3E and CD3G-CD3E heterodimers preferentially associate with TR alpha and TR beta chains, respectively. The association of the CD247 homodimer is the last step of TcR assembly in the endoplasmic reticulum and is required for transport to the cell surface.

It localises to the cell membrane. Its function is as follows. V region of the variable domain of T cell receptor (TR) beta chain that participates in the antigen recognition. Alpha-beta T cell receptors are antigen specific receptors which are essential to the immune response and are present on the cell surface of T lymphocytes. Recognize peptide-major histocompatibility (MH) (pMH) complexes that are displayed by antigen presenting cells (APC), a prerequisite for efficient T cell adaptive immunity against pathogens. Binding of alpha-beta TR to pMH complex initiates TR-CD3 clustering on the cell surface and intracellular activation of LCK that phosphorylates the ITAM motifs of CD3G, CD3D, CD3E and CD247 enabling the recruitment of ZAP70. In turn ZAP70 phosphorylates LAT, which recruits numerous signaling molecules to form the LAT signalosome. The LAT signalosome propagates signal branching to three major signaling pathways, the calcium, the mitogen-activated protein kinase (MAPK) kinase and the nuclear factor NF-kappa-B (NF-kB) pathways, leading to the mobilization of transcription factors that are critical for gene expression and essential for T cell growth and differentiation. The T cell repertoire is generated in the thymus, by V-(D)-J rearrangement. This repertoire is then shaped by intrathymic selection events to generate a peripheral T cell pool of self-MH restricted, non-autoaggressive T cells. Post-thymic interaction of alpha-beta TR with the pMH complexes shapes TR structural and functional avidity. This is T cell receptor beta variable 7-8 from Homo sapiens (Human).